The primary structure comprises 194 residues: Cysteine and glycine-rich protein 2 (194 aa).

One can recognise an LIM zinc-binding 1 domain in the interval 10 to 61 (CGACGRTVYHAEEVQCDGRSFHRCCFLCMVCRKNLDSTTVAIHDAEVYCKSC). The Nuclear localization signal signature appears at 64-69 (KKYGPK). The region spanning 120 to 171 (CSRCGDSVYAAEKVIGAGKPWHKNCFRCAKCGKSLESTTLTEKEGEIYCKGC) is the LIM zinc-binding 2 domain.

It is found in the nucleus. In terms of biological role, totally down-regulated in transformed cells. May therefore take part in the control of cell growth and differentiation. This Gallus gallus (Chicken) protein is Cysteine and glycine-rich protein 2 (CSRP2).